The sequence spans 128 residues: Cystatin-2 (128 aa).

An N-terminal signal peptide occupies residues 1–19; it reads MSSFKVAVLLIAVYGASQG. The Cystatin domain maps to 29 to 116; the sequence is QDPTEARFLE…CVAVIYHVPW (88 aa). Disulfide bonds link cysteine 84–cysteine 96 and cysteine 107–cysteine 127.

It belongs to the cystatin family. Widely expressed. Detected in salivary glands (at protein level), gut (at protein level), ovaries, and Malpighian tubules.

It is found in the secreted. Inhibitor of cysteine proteinases with broad specificity for mammalian cathepsins, including endopeptidases (cathepsins L and S) and exopeptidases (cathepsins B, C and H). Also inhibits endogenous cathepsin B-like and cathepsin C-like proteinases. Does not inhibit human legumain. May mimic specific host-derived cystatin(s) to interfere with its/their function in controlling cathepsin-mediated proteolysis. Affects the function of antigen-presenting mouse dendritic cells by reducing the production of the pro-inflammatory cytokines TNF and interleukin-12, and proliferation of antigen-specific CD4+ T-cells, suggesting it may suppress the host adaptive immune response. It is noteworthy that immunization of mice with this protein reduces O.moubata survival in infestation experiments. The sequence is that of Cystatin-2 from Ornithodoros moubata (Soft tick).